Reading from the N-terminus, the 239-residue chain is Large ribosomal subunit protein uL2 (239 aa).

Residues 200–239 are disordered; that stretch reads VNHPHGGKEHHIGRPSTVSRRAPPGRKVGHIAARRTGRRK. Basic residues predominate over residues 222-239; it reads PPGRKVGHIAARRTGRRK.

This sequence belongs to the universal ribosomal protein uL2 family. Part of the 50S ribosomal subunit. Forms a bridge to the 30S subunit in the 70S ribosome.

Its function is as follows. One of the primary rRNA binding proteins. Required for association of the 30S and 50S subunits to form the 70S ribosome, for tRNA binding and peptide bond formation. It has been suggested to have peptidyltransferase activity; this is somewhat controversial. Makes several contacts with the 16S rRNA in the 70S ribosome. The polypeptide is Large ribosomal subunit protein uL2 (Thermococcus gammatolerans (strain DSM 15229 / JCM 11827 / EJ3)).